Consider the following 467-residue polypeptide: Serum response factor homolog B (467 aa).

Residues methionine 1–aspartate 15 are compositionally biased toward polar residues. 3 disordered regions span residues methionine 1–arginine 38, asparagine 115–threonine 245, and isoleucine 301–leucine 467. In terms of domain architecture, MADS-box spans serine 36–lysine 96. Residues asparagine 128–asparagine 205 show a composition bias toward low complexity. Over residues cysteine 206–serine 220 the composition is skewed to basic and acidic residues. Low complexity-rich tracts occupy residues asparagine 222–threonine 245, isoleucine 301–isoleucine 334, glycine 347–asparagine 392, and proline 401–tyrosine 440. Residues glutamine 442–leucine 467 are compositionally biased toward polar residues.

It localises to the nucleus. This is Serum response factor homolog B (srfB) from Dictyostelium discoideum (Social amoeba).